A 567-amino-acid chain; its full sequence is Zinc finger protein 143 (567 aa).

C2H2-type zinc fingers lie at residues 230-254, 260-284, 290-314, 320-344, 350-374, 380-404, and 410-433; these read FRCD…ERSH, YQCD…VRTH, YRCS…VRTH, FKCP…IRTH, YYCS…VRIH, YVCT…HVVH, and YNCN…RTAH. Positions 506–520 are enriched in polar residues; that stretch reads SATESGPQHSHNLGG. Residues 506 to 525 are disordered; it reads SATESGPQHSHNLGGSESRP.

It belongs to the GLI C2H2-type zinc-finger protein family.

The protein localises to the nucleus. Transcriptional activator. Activates the gene for selenocysteine tRNA (tRNAsec). Binds to the activator element (AE) motif of the selenocysteine tRNA gene promoter. This is Zinc finger protein 143 (znf143) from Xenopus tropicalis (Western clawed frog).